Reading from the N-terminus, the 208-residue chain is Large ribosomal subunit protein uL4 (208 aa).

Positions 45–83 (RQGTHKSKTRAEVRGGGRKPYRQKGTGNARQGSTRSPLM) are disordered. Positions 69–80 (GTGNARQGSTRS) are enriched in polar residues.

It belongs to the universal ribosomal protein uL4 family. Part of the 50S ribosomal subunit.

One of the primary rRNA binding proteins, this protein initially binds near the 5'-end of the 23S rRNA. It is important during the early stages of 50S assembly. It makes multiple contacts with different domains of the 23S rRNA in the assembled 50S subunit and ribosome. Its function is as follows. Forms part of the polypeptide exit tunnel. In Chlorobium luteolum (strain DSM 273 / BCRC 81028 / 2530) (Pelodictyon luteolum), this protein is Large ribosomal subunit protein uL4.